Here is a 302-residue protein sequence, read N- to C-terminus: Aquaporin NIP3-1 (302 aa).

Residues 1 to 31 (MEPGSTPPNGSAPATPGTPAPLFSSGGPRVD) form a disordered region. Over residues 7-21 (PPNGSAPATPGTPAP) the composition is skewed to low complexity. The next 2 helical transmembrane spans lie at 76-96 (LGAE…APIV) and 102-122 (GAIS…TVIL). Positions 133 to 135 (NPS) match the NPA 1 motif. Helical transmembrane passes span 149 to 169 (LQVP…AFAL), 193 to 213 (AFFT…AVAT), and 217 to 237 (AVGE…ILVA). An NPA 2 motif is present at residues 246–248 (NPV). A helical membrane pass occupies residues 264–284 (WIYLLAPTLGALAGASVYKAV).

The protein belongs to the MIP/aquaporin (TC 1.A.8) family. NIP (TC 1.A.8.12) subfamily.

It localises to the membrane. Functionally, aquaporins facilitate the transport of water and small neutral solutes across cell membranes. This Zea mays (Maize) protein is Aquaporin NIP3-1 (NIP3-1).